Here is a 319-residue protein sequence, read N- to C-terminus: Acetyl esterase (319 aa).

An Involved in the stabilization of the negatively charged intermediate by the formation of the oxyanion hole motif is present at residues 91 to 93; it reads HGG. Active-site residues include Ser165, Asp262, and His292.

This sequence belongs to the 'GDXG' lipolytic enzyme family. In terms of assembly, homodimer. Interacts with MalT and MelA.

Its subcellular location is the cytoplasm. Its function is as follows. Displays esterase activity towards short chain fatty esters (acyl chain length of up to 8 carbons). Able to hydrolyze triacetylglycerol (triacetin) and tributyrylglycerol (tributyrin), but not trioleylglycerol (triolein) or cholesterol oleate. Negatively regulates MalT activity by antagonizing maltotriose binding. Inhibits MelA galactosidase activity. The polypeptide is Acetyl esterase (Escherichia coli O157:H7).